A 628-amino-acid chain; its full sequence is Chaperone protein HtpG (628 aa).

The tract at residues 1–337 is a; substrate-binding; that stretch reads MSEKKYTFET…SADLPLNVSR (337 aa). A b region spans residues 338-554; it reads EILQHNKVID…DYGMSLHMQK (217 aa). Residues 555-628 form a c region; the sequence is MMEEAGQSFM…FVKLVNKYIR (74 aa).

Belongs to the heat shock protein 90 family. Homodimer.

Its subcellular location is the cytoplasm. Functionally, molecular chaperone. Has ATPase activity. This is Chaperone protein HtpG from Francisella tularensis subsp. tularensis (strain FSC 198).